The sequence spans 230 residues: LexA repressor (230 aa).

The interval 1 to 21 is disordered; that stretch reads MSDDSSETRTGGRRGADAGLT. The H-T-H motif DNA-binding region spans 44–64; that stretch reads IREIGDAVGLTSTSSVAHQLR. Active-site for autocatalytic cleavage activity residues include serine 154 and lysine 191.

Belongs to the peptidase S24 family. Homodimer.

The enzyme catalyses Hydrolysis of Ala-|-Gly bond in repressor LexA.. In terms of biological role, represses a number of genes involved in the response to DNA damage (SOS response), including recA and lexA. In the presence of single-stranded DNA, RecA interacts with LexA causing an autocatalytic cleavage which disrupts the DNA-binding part of LexA, leading to derepression of the SOS regulon and eventually DNA repair. The chain is LexA repressor from Mycobacterium sp. (strain JLS).